Reading from the N-terminus, the 330-residue chain is Probable xanthine dehydrogenase subunit A (330 aa).

In terms of assembly, could be composed of four subunits: PucA, PucC, PucD and PucE.

The enzyme catalyses xanthine + NAD(+) + H2O = urate + NADH + H(+). The catalysed reaction is hypoxanthine + NAD(+) + H2O = xanthine + NADH + H(+). The protein operates within purine metabolism; hypoxanthine degradation; urate from hypoxanthine: step 1/2. Its pathway is purine metabolism; hypoxanthine degradation; urate from hypoxanthine: step 2/2. Functionally, oxidizes hypoxanthine and xanthine to uric acid. PucA subunit could exert a molybdenum cofactor recruiting function. The polypeptide is Probable xanthine dehydrogenase subunit A (pucA) (Bacillus subtilis (strain 168)).